Here is a 507-residue protein sequence, read N- to C-terminus: Probable cyclic di-GMP phosphodiesterase PdeG (507 aa).

Helical transmembrane passes span 4-24 and 217-237; these read TLIP…ILNI and LIDK…AAAF. The EAL domain maps to 246–500; that stretch reads SATPEEILRR…DLVKIILSKP (255 aa).

The protein localises to the cell membrane. It carries out the reaction 3',3'-c-di-GMP + H2O = 5'-phosphoguanylyl(3'-&gt;5')guanosine + H(+). Functionally, phosphodiesterase (PDE) that catalyzes the hydrolysis of cyclic-di-GMP (c-di-GMP) to 5'-pGpG. The protein is Probable cyclic di-GMP phosphodiesterase PdeG of Escherichia coli (strain K12).